The sequence spans 931 residues: Isoleucine--tRNA ligase (931 aa).

The 'HIGH' region signature appears at 57–67 (PFANGNIHMGH). L-isoleucyl-5'-AMP is bound at residue Glu556. The 'KMSKS' region signature appears at 597–601 (KMSKS). An ATP-binding site is contributed by Lys600. Residues Cys890, Cys893, Cys910, and Cys913 each coordinate Zn(2+).

The protein belongs to the class-I aminoacyl-tRNA synthetase family. IleS type 1 subfamily. Monomer. Zn(2+) serves as cofactor.

Its subcellular location is the cytoplasm. The enzyme catalyses tRNA(Ile) + L-isoleucine + ATP = L-isoleucyl-tRNA(Ile) + AMP + diphosphate. Catalyzes the attachment of isoleucine to tRNA(Ile). As IleRS can inadvertently accommodate and process structurally similar amino acids such as valine, to avoid such errors it has two additional distinct tRNA(Ile)-dependent editing activities. One activity is designated as 'pretransfer' editing and involves the hydrolysis of activated Val-AMP. The other activity is designated 'posttransfer' editing and involves deacylation of mischarged Val-tRNA(Ile). This Lactobacillus delbrueckii subsp. bulgaricus (strain ATCC 11842 / DSM 20081 / BCRC 10696 / JCM 1002 / NBRC 13953 / NCIMB 11778 / NCTC 12712 / WDCM 00102 / Lb 14) protein is Isoleucine--tRNA ligase.